Here is a 468-residue protein sequence, read N- to C-terminus: H(+)/Cl(-) exchange transporter ClcA (468 aa).

The Cytoplasmic portion of the chain corresponds to 1 to 30; sequence MSTRETFKISLLAKMPKDVINQFLSKDKTP. The helical transmembrane segment at 31 to 67 threads the bilayer; sequence FSVLFLSLLVGILAGLVGTYFEQAVHLVSETRTDWLK. Topologically, residues 68 to 74 are periplasmic; sequence SEIGSFL. Residues 75 to 98 form a helical membrane-spanning segment; that stretch reads PLWLAAFLISAFLAFIGYFLVHRF. The short motif at 104–108 is the Selectivity filter part_1 element; it reads GSGIP. A chloride-binding site is contributed by S105. Positions 107-114 form an intramembrane region, helical; it reads IPEIEGAM. Topologically, residues 115–121 are cytoplasmic; it reads DGMRPVR. A run of 2 helical transmembrane segments spans residues 122–139 and 146–164; these read WWRV…ALGS and EGPT…SDIF. Residues 144 to 148 carry the Selectivity filter part_2 motif; the sequence is GREGP. Topologically, residues 165 to 174 are cytoplasmic; the sequence is RVKNEDTRHS. 2 consecutive intramembrane regions (helical) follow at residues 175-187 and 191-199; these read LLAA…LAAA and PLAGIMFVI. Topologically, residues 200-212 are cytoplasmic; sequence EEMRPQFRYTLIS. A helical transmembrane segment spans residues 213–230; sequence VRAVIISAVAANIVFRVI. Topologically, residues 231-250 are periplasmic; sequence NGQDAVITMPQYDAPELSTL. The helical transmembrane segment at 251-279 threads the bilayer; the sequence is GLFLLLGALFGVFGVLFNYLITLAQDLFV. At 280-285 the chain is on the cytoplasmic side; it reads KFHRND. The chain crosses the membrane as a helical span at residues 286–307; it reads RKRYLLTGSMIGGCFGLLLLYV. Residues 308–327 are Periplasmic-facing; the sequence is PELTGGGISLIPTITNGGYG. The next 2 membrane-spanning stretches (helical) occupy residues 328–347 and 353–374; these read AGIL…LCFG and GIFA…LIAK. The short motif at 353–357 is the Selectivity filter part_3 element; that stretch reads GIFAP. The chloride site is built by I354 and F355. At 375–384 the chain is on the periplasmic side; sequence VWFPELNIEP. The helical intramembrane region spans 385–399; sequence GMFAIAGMGALFAAT. Positions 400 to 402 form an intramembrane region, note=Loop between two helices; the sequence is VRA. Residues 403-414 constitute an intramembrane region (helical); sequence PITGILLVIEMT. The note=Loop between two helices intramembrane region spans 415 to 419; the sequence is NNYHL. The helical transmembrane segment at 420–436 threads the bilayer; sequence ILPLIITSLGAVIFAQL. The Cytoplasmic segment spans residues 437-468; sequence LGGQPIYSQLLHRTLKNQKLQQQDLPPQSPNS. Y443 lines the chloride pocket.

This sequence belongs to the chloride channel (TC 2.A.49) family. ClcA subfamily. Homodimer.

It is found in the cell inner membrane. The catalysed reaction is 2 chloride(in) + H(+)(out) = 2 chloride(out) + H(+)(in). Proton-coupled chloride transporter. Functions as antiport system and exchanges two chloride ions for 1 proton. Probably acts as an electrical shunt for an outwardly-directed proton pump that is linked to amino acid decarboxylation, as part of the extreme acid resistance (XAR) response. This chain is H(+)/Cl(-) exchange transporter ClcA, found in Vibrio cholerae serotype O1 (strain ATCC 39541 / Classical Ogawa 395 / O395).